The following is a 179-amino-acid chain: Acireductone dioxygenase (179 aa).

A disordered region spans residues 1 to 21 (MVQAWYMDDSTEDQRKPHHLQ). 4 residues coordinate Fe(2+): H88, H90, E94, and H133. Positions 88, 90, 94, and 133 each coordinate Ni(2+).

It belongs to the acireductone dioxygenase (ARD) family. Monomer. Interacts with MMP14. The cofactor is Fe(2+). It depends on Ni(2+) as a cofactor.

Its subcellular location is the cytoplasm. It localises to the nucleus. The protein localises to the cell membrane. The enzyme catalyses 1,2-dihydroxy-5-(methylsulfanyl)pent-1-en-3-one + O2 = 4-methylsulfanyl-2-oxobutanoate + formate + 2 H(+). The catalysed reaction is 1,2-dihydroxy-5-(methylsulfanyl)pent-1-en-3-one + O2 = 3-(methylsulfanyl)propanoate + CO + formate + 2 H(+). It participates in amino-acid biosynthesis; L-methionine biosynthesis via salvage pathway; L-methionine from S-methyl-5-thio-alpha-D-ribose 1-phosphate: step 5/6. Catalyzes 2 different reactions between oxygen and the acireductone 1,2-dihydroxy-3-keto-5-methylthiopentene (DHK-MTPene) depending upon the metal bound in the active site. Fe-containing acireductone dioxygenase (Fe-ARD) produces formate and 2-keto-4-methylthiobutyrate (KMTB), the alpha-ketoacid precursor of methionine in the methionine recycle pathway. Ni-containing acireductone dioxygenase (Ni-ARD) produces methylthiopropionate, carbon monoxide and formate, and does not lie on the methionine recycle pathway. The chain is Acireductone dioxygenase (adi1) from Xenopus tropicalis (Western clawed frog).